Here is a 404-residue protein sequence, read N- to C-terminus: tRNA-specific 2-thiouridylase MnmA (404 aa).

ATP-binding positions include 42 to 49 and Leu68; that span reads GLSGGVDS. The active-site Nucleophile is Cys129. Cys129 and Cys239 form a disulfide bridge. Residue Gly154 coordinates ATP. The interaction with tRNA stretch occupies residues 189-191; the sequence is KDQ. Cys239 serves as the catalytic Cysteine persulfide intermediate. Residues 344-345 are interaction with tRNA; it reads RY.

The protein belongs to the MnmA/TRMU family.

Its subcellular location is the cytoplasm. It carries out the reaction S-sulfanyl-L-cysteinyl-[protein] + uridine(34) in tRNA + AH2 + ATP = 2-thiouridine(34) in tRNA + L-cysteinyl-[protein] + A + AMP + diphosphate + H(+). In terms of biological role, catalyzes the 2-thiolation of uridine at the wobble position (U34) of tRNA, leading to the formation of s(2)U34. The protein is tRNA-specific 2-thiouridylase MnmA of Prochlorococcus marinus (strain NATL1A).